The sequence spans 170 residues: Small ribosomal subunit protein uS3mB (170 aa).

The transit peptide at 1 to 30 directs the protein to the mitochondrion; it reads MAAPVMSAFGRLQGLIRTERSLLTHVQSRC.

It belongs to the universal ribosomal protein uS3 family. In terms of assembly, component of the mitochondrial ribosome small subunit (28S) which comprises a 12S rRNA and about 30 distinct proteins.

It localises to the mitochondrion. This Xenopus laevis (African clawed frog) protein is Small ribosomal subunit protein uS3mB (mrps24-b).